A 97-amino-acid polypeptide reads, in one-letter code: Venom peptide HsVx1 (97 aa).

Residues 1–20 (MSHLRIAVTFLCTLFALTAG) form the signal peptide.

The protein belongs to the scorpion La1-like peptide family. In terms of processing, contains 4 disulfide bonds. Expressed by the venom gland.

It is found in the secreted. The sequence is that of Venom peptide HsVx1 from Heterometrus spinifer (Asia giant forest scorpion).